A 26-amino-acid chain; its full sequence is Acyl carrier protein (26 aa).

Positions 2–26 constitute a Carrier domain; the sequence is SDIEQRIKQAVAEQLGMRAEEIKNE.

It belongs to the acyl carrier protein (ACP) family. Post-translationally, 4'-phosphopantetheine is transferred from CoA to a specific serine of apo-ACP by AcpS. This modification is essential for activity because fatty acids are bound in thioester linkage to the sulfhydryl of the prosthetic group.

The protein localises to the cytoplasm. It participates in lipid metabolism; fatty acid biosynthesis. Functionally, carrier of the growing fatty acid chain in fatty acid biosynthesis. The polypeptide is Acyl carrier protein (acpP) (Acinetobacter calcoaceticus).